Consider the following 245-residue polypeptide: 1-(5-phosphoribosyl)-5-[(5-phosphoribosylamino)methylideneamino] imidazole-4-carboxamide isomerase (245 aa).

Asp-8 serves as the catalytic Proton acceptor. Asp-131 serves as the catalytic Proton donor.

The protein belongs to the HisA/HisF family.

It is found in the cytoplasm. It carries out the reaction 1-(5-phospho-beta-D-ribosyl)-5-[(5-phospho-beta-D-ribosylamino)methylideneamino]imidazole-4-carboxamide = 5-[(5-phospho-1-deoxy-D-ribulos-1-ylimino)methylamino]-1-(5-phospho-beta-D-ribosyl)imidazole-4-carboxamide. The protein operates within amino-acid biosynthesis; L-histidine biosynthesis; L-histidine from 5-phospho-alpha-D-ribose 1-diphosphate: step 4/9. This chain is 1-(5-phosphoribosyl)-5-[(5-phosphoribosylamino)methylideneamino] imidazole-4-carboxamide isomerase, found in Neisseria gonorrhoeae (strain ATCC 700825 / FA 1090).